The following is an 804-amino-acid chain: Phenylalanine--tRNA ligase beta subunit (804 aa).

Positions 40-155 (GEGIKGVVIG…NDAETGSDAL (116 aa)) constitute a tRNA-binding domain. The B5 domain maps to 409–484 (IEANNIHVSA…RLYGYDNIPS (76 aa)). Positions 462, 468, 471, and 472 each coordinate Mg(2+). In terms of domain architecture, FDX-ACB spans 710–803 (PKYPSVTRDI…LEDTYQAVLR (94 aa)).

It belongs to the phenylalanyl-tRNA synthetase beta subunit family. Type 1 subfamily. Tetramer of two alpha and two beta subunits. It depends on Mg(2+) as a cofactor.

Its subcellular location is the cytoplasm. The enzyme catalyses tRNA(Phe) + L-phenylalanine + ATP = L-phenylalanyl-tRNA(Phe) + AMP + diphosphate + H(+). The sequence is that of Phenylalanine--tRNA ligase beta subunit (pheT) from Bacillus subtilis (strain 168).